The chain runs to 116 residues: Nitrogenase-stabilizing/protective protein NifW (116 aa).

This sequence belongs to the NifW family. In terms of assembly, homotrimer; associates with NifD.

In terms of biological role, may protect the nitrogenase Fe-Mo protein from oxidative damage. The polypeptide is Nitrogenase-stabilizing/protective protein NifW (Rhodopseudomonas palustris (strain ATCC BAA-98 / CGA009)).